A 115-amino-acid chain; its full sequence is MAENITSAKATAKMVRVSARKVRLVLDAIRGKSVAEAFAILKFTPRGAASDVEKVLKSAVANAENNFDLDRASLVVSEAFANEGPTLKRFRPRAKGSASPINKRTSHITVVVTER.

The protein belongs to the universal ribosomal protein uL22 family. Part of the 50S ribosomal subunit.

Functionally, this protein binds specifically to 23S rRNA; its binding is stimulated by other ribosomal proteins, e.g. L4, L17, and L20. It is important during the early stages of 50S assembly. It makes multiple contacts with different domains of the 23S rRNA in the assembled 50S subunit and ribosome. The globular domain of the protein is located near the polypeptide exit tunnel on the outside of the subunit, while an extended beta-hairpin is found that lines the wall of the exit tunnel in the center of the 70S ribosome. The protein is Large ribosomal subunit protein uL22 of Limosilactobacillus reuteri subsp. reuteri (strain JCM 1112) (Lactobacillus reuteri).